We begin with the raw amino-acid sequence, 385 residues long: Heptahelical transmembrane protein 4 (385 aa).

Residues 1-12 show a composition bias toward basic and acidic residues; it reads MGDEAEIKEHLK. Residues 1 to 22 form a disordered region; sequence MGDEAEIKEHLKPQASSETMDK. Residues 1–79 are Cytoplasmic-facing; sequence MGDEAEIKEH…LSIFTIHNET (79 aa). A helical membrane pass occupies residues 80–100; the sequence is LNVWTHLIGFFLFLALTIYTA. At 101–191 the chain is on the extracellular side; sequence TKVPSVVDLH…LIFRPITRWP (91 aa). A helical transmembrane segment spans residues 192 to 212; that stretch reads FYAFLGGAMFCLLASSTCHLL. Residues 213 to 228 are Cytoplasmic-facing; the sequence is SCHSERVSYIMLRLDY. A helical membrane pass occupies residues 229-249; the sequence is AGIAALIATSFYPPVYYSFMC. Residues 250 to 256 lie on the Extracellular side of the membrane; the sequence is DPFFCNL. Residues 257–277 traverse the membrane as a helical segment; sequence YLGFITILGIATVLVSLLPVF. The Cytoplasmic portion of the chain corresponds to 278–288; it reads QSPEFRVVRAS. Residues 289–309 traverse the membrane as a helical segment; the sequence is LFFGMGFSGLAPILHKLIIFW. At 310-313 the chain is on the extracellular side; it reads DQPE. A helical membrane pass occupies residues 314 to 334; sequence ALHTTGYEILMGLLYGLGALV. Over 335–356 the chain is Cytoplasmic; the sequence is YATRIPERWMPGKFDIAGHSHQ. The helical transmembrane segment at 357–377 threads the bilayer; the sequence is LFHVLVVAGAFTHYRAGLVYL.

Belongs to the ADIPOR family. In terms of tissue distribution, expressed in roots, leaves, stems and flowers.

The protein localises to the membrane. May play a role in abiotic stress response. This chain is Heptahelical transmembrane protein 4 (HHP4), found in Arabidopsis thaliana (Mouse-ear cress).